Reading from the N-terminus, the 182-residue chain is Peptidoglycan recognition protein 1 (182 aa).

Residues methionine 1–serine 18 form the signal peptide. Intrachain disulfides connect cysteine 17-cysteine 141, cysteine 33-cysteine 78, and cysteine 54-cysteine 60. The region spanning histidine 39 to glycine 167 is the N-acetylmuramoyl-L-alanine amidase domain.

The protein belongs to the N-acetylmuramoyl-L-alanine amidase 2 family. As to quaternary structure, homodimer; disulfide-linked. Interacts with HSPA1A; this interaction forms a cytotoxic complex that is released by lymphokine-activated killer cells. Interacts with HSPBP1; this interaction blocks the cytotoxic activity of the PGLYRP1-HSPA1A complex. Strongly expressed in spleen and lung. Also detected in brain and thymus. In the lung, expressed in the intraalveolar space, in the brain, expressed in the Purkinje cells of the cerebellum and in certain layers of neurons in the hippocampus. Also detected in cells filling the space within the intestinal villus.

The protein resides in the cytoplasm. Its subcellular location is the secreted. In terms of biological role, innate immunity protein that plays several important functions in antimicrobial and antitumor defense systems. Acts as a pattern receptor that binds to murein peptidoglycans (PGN) of Gram-positive bacteria and thus provides bactericidal activity. Forms an equimolar complex with heat shock protein HSPA1A and induces programmed cell death through apoptosis and necroptosis in tumor cell lines by activating the TNFR1 receptor on the target cell membrane. In addition, acts in complex with the Ca(2+)-binding protein S100A4 as a chemoattractant able to induce lymphocyte movement. Mechanistically, this complex acts as a ligand of the chemotactic receptors CCR5 and CXCR3 which are present on the cells of the immune system. Also promotes the activation of lymphocytes that become able to kill virus-infected cells as well as tumor cells by modulating the spectrum of their target-cell specificity. Induction of cytotoxicity on monocyte surface requires interaction with TREM1 receptor. This chain is Peptidoglycan recognition protein 1 (Pglyrp1), found in Mus musculus (Mouse).